A 63-amino-acid chain; its full sequence is Conotoxin Tx-D0111 (63 aa).

Residues 1 to 19 (MRCLPVFVILLLLIASTPS) form the signal peptide. A propeptide spanning residues 20 to 47 (DTVPLKTKDDMPQASFHGNARRTLQMLS) is cleaved from the precursor.

The protein belongs to the conotoxin T superfamily. In terms of processing, contains 2 disulfide bonds that can be either 'C1-C3, C2-C4' or 'C1-C4, C2-C3', since these disulfide connectivities have been observed for conotoxins with cysteine framework V (for examples, see AC P0DQQ7 and AC P81755). As to expression, expressed by the venom duct.

The protein localises to the secreted. In Conus textile (Cloth-of-gold cone), this protein is Conotoxin Tx-D0111.